Reading from the N-terminus, the 324-residue chain is DGAT1/2-independent enzyme synthesizing storage lipids (324 aa).

The Lumenal portion of the chain corresponds to 1-50 (MIDKNQTCGVGQDSVPYMICLIHILEEWFGVEQLEDYLNFANYLLWVFTP). Residue asparagine 5 is glycosylated (N-linked (GlcNAc...) asparagine). Residues 51 to 71 (LILLILPYFTIFLLYLTIIFL) traverse the membrane as a helical segment. The Cytoplasmic portion of the chain corresponds to 72–125 (HIYKRKNVLKEAYSHNLWDGARKTVATLWDGHAAVWHGYEVHGMEKIPEDGPAL). Residues 126 to 146 (IIFYHGAIPIDFYYFMAKIFI) traverse the membrane as a helical segment. Residue histidine 130 is part of the active site. Residues 147-324 (HKGRTCRVVA…IMSALLERFH (178 aa)) are Lumenal-facing.

Belongs to the diacylglycerol acyltransferase family. Highly divergent.

The protein localises to the endoplasmic reticulum membrane. The enzyme catalyses a 1,2-diacylglycerol + a 1,2-diacyl-sn-glycero-3-phosphocholine = a triacylglycerol + a 1-acyl-sn-glycero-3-phosphocholine. The catalysed reaction is a 1-O-alkyl-2-acyl-sn-glycero-3-phosphocholine + a 1,2-diacylglycerol = a 1-O-alkyl-sn-glycero-3-phosphocholine + a triacylglycerol. It catalyses the reaction a 2-acylglycerol + an acyl-CoA = a 1,2-diacylglycerol + CoA. It carries out the reaction an acyl-CoA + a 1,2-diacyl-sn-glycerol = a triacyl-sn-glycerol + CoA. The enzyme catalyses 2-(9Z-octadecenoyl)-glycerol + (9Z)-octadecenoyl-CoA = 1,2-di-(9Z-octadecenoyl)-glycerol + CoA. The catalysed reaction is 1,2-di-(9Z-octadecenoyl)-sn-glycerol + (9Z)-octadecenoyl-CoA = 1,2,3-tri-(9Z-octadecenoyl)-glycerol + CoA. Acyltransferase activity is specifically inhibited by TMX1 at the endoplasmic reticulum, restricting accumulation of triacylglycerol. Functionally, catalytic subunit of the alternative triglyceride biosynthesis pathway, which mediates formation of triacylglycerol from diacylglycerol and membrane phospholipids. Synthesizes triacylglycerol at the expense of membrane phospholipids, such as phosphatidylcholine (PC) and its ether-linked form (ePC), thereby altering the composition of membranes. The alternative triglyceride biosynthesis pathway is probably required to provide the energy required for rapid growth when fuel sources are limiting. It maintains mitochondrial function during periods of extracellular lipid starvation. Can also use acyl-CoA as donor: acts as a acyl-CoA:monoacylglycerol acyltransferase (MGAT), but also shows acyl-CoA:diacylglycerol acyltransferase (DGAT) activity. This chain is DGAT1/2-independent enzyme synthesizing storage lipids, found in Homo sapiens (Human).